The sequence spans 377 residues: tRNA N6-adenosine threonylcarbamoyltransferase (377 aa).

Fe cation contacts are provided by His-129 and His-133. Substrate contacts are provided by residues 151–155, Asp-184, Gly-197, and Asn-298; that span reads LVSGG. Asp-326 serves as a coordination point for Fe cation. The segment at 358–377 is disordered; it reads DGAAAKSDPAIGSGRKGPKA.

It belongs to the KAE1 / TsaD family. The cofactor is Fe(2+).

It is found in the cytoplasm. The catalysed reaction is L-threonylcarbamoyladenylate + adenosine(37) in tRNA = N(6)-L-threonylcarbamoyladenosine(37) in tRNA + AMP + H(+). Required for the formation of a threonylcarbamoyl group on adenosine at position 37 (t(6)A37) in tRNAs that read codons beginning with adenine. Is involved in the transfer of the threonylcarbamoyl moiety of threonylcarbamoyl-AMP (TC-AMP) to the N6 group of A37, together with TsaE and TsaB. TsaD likely plays a direct catalytic role in this reaction. The chain is tRNA N6-adenosine threonylcarbamoyltransferase from Maricaulis maris (strain MCS10) (Caulobacter maris).